We begin with the raw amino-acid sequence, 336 residues long: Fructose-1,6-bisphosphatase class 1 (336 aa).

Positions 90, 112, 114, and 115 each coordinate Mg(2+). Residues 115–118 (DGSS), asparagine 211, and lysine 277 contribute to the substrate site. Residue glutamate 283 coordinates Mg(2+).

The protein belongs to the FBPase class 1 family. As to quaternary structure, homotetramer. Mg(2+) serves as cofactor.

It is found in the cytoplasm. It catalyses the reaction beta-D-fructose 1,6-bisphosphate + H2O = beta-D-fructose 6-phosphate + phosphate. It participates in carbohydrate biosynthesis; gluconeogenesis. This is Fructose-1,6-bisphosphatase class 1 from Pseudomonas entomophila (strain L48).